The following is a 471-amino-acid chain: Glutamate--tRNA ligase 1 (471 aa).

The 'HIGH' region signature appears at 15–25; it reads PSPTGYLHIGG. The 'KMSKS' region signature appears at 243–247; it reads KLSKR. Lysine 246 lines the ATP pocket.

The protein belongs to the class-I aminoacyl-tRNA synthetase family. Glutamate--tRNA ligase type 1 subfamily. Monomer.

The protein localises to the cytoplasm. The catalysed reaction is tRNA(Glu) + L-glutamate + ATP = L-glutamyl-tRNA(Glu) + AMP + diphosphate. In terms of biological role, catalyzes the attachment of glutamate to tRNA(Glu) in a two-step reaction: glutamate is first activated by ATP to form Glu-AMP and then transferred to the acceptor end of tRNA(Glu). In Cereibacter sphaeroides (strain ATCC 17029 / ATH 2.4.9) (Rhodobacter sphaeroides), this protein is Glutamate--tRNA ligase 1.